Here is a 432-residue protein sequence, read N- to C-terminus: Glutamate-1-semialdehyde 2,1-aminomutase (432 aa).

Lys-271 is subject to N6-(pyridoxal phosphate)lysine.

The protein belongs to the class-III pyridoxal-phosphate-dependent aminotransferase family. HemL subfamily. As to quaternary structure, homodimer. It depends on pyridoxal 5'-phosphate as a cofactor.

The protein localises to the cytoplasm. It carries out the reaction (S)-4-amino-5-oxopentanoate = 5-aminolevulinate. It functions in the pathway porphyrin-containing compound metabolism; protoporphyrin-IX biosynthesis; 5-aminolevulinate from L-glutamyl-tRNA(Glu): step 2/2. It participates in porphyrin-containing compound metabolism; chlorophyll biosynthesis. This is Glutamate-1-semialdehyde 2,1-aminomutase from Prochlorococcus marinus (strain MIT 9211).